We begin with the raw amino-acid sequence, 201 residues long: Large ribosomal subunit protein eL15A (201 aa).

Residues 161–182 are disordered; the sequence is SRGLTSIGKKSRGIGKGHRFNN. Positions 169–179 are enriched in basic residues; that stretch reads KKSRGIGKGHR.

It belongs to the eukaryotic ribosomal protein eL15 family. Component of the large ribosomal subunit (LSU). Mature yeast ribosomes consist of a small (40S) and a large (60S) subunit. The 40S small subunit contains 1 molecule of ribosomal RNA (18S rRNA) and at least 33 different proteins. The large 60S subunit contains 3 rRNA molecules (25S, 5.8S and 5S rRNA) and at least 46 different proteins.

The protein localises to the cytoplasm. It is found in the nucleus. It localises to the nucleolus. Component of the ribosome, a large ribonucleoprotein complex responsible for the synthesis of proteins in the cell. The small ribosomal subunit (SSU) binds messenger RNAs (mRNAs) and translates the encoded message by selecting cognate aminoacyl-transfer RNA (tRNA) molecules. The large subunit (LSU) contains the ribosomal catalytic site termed the peptidyl transferase center (PTC), which catalyzes the formation of peptide bonds, thereby polymerizing the amino acids delivered by tRNAs into a polypeptide chain. The nascent polypeptides leave the ribosome through a tunnel in the LSU and interact with protein factors that function in enzymatic processing, targeting, and the membrane insertion of nascent chains at the exit of the ribosomal tunnel. This is Large ribosomal subunit protein eL15A (rpl15) from Schizosaccharomyces pombe (strain 972 / ATCC 24843) (Fission yeast).